The chain runs to 441 residues: MTKKVSIRTFGCQMNQADTEIISSLLTAEGYCLVAEEDDADLVMLNTCAVRENAVEKIMHHLDSLKGLRRRRRGLVVGVIGCVPQYYREEMFQKSGVIDFIAGPDSYRKLPGLIRNAFQGIRGAELFLTQSETYGDIEPMRSGSISAFIPVMRGCNNMCAFCVVPFTRGRERSRSLQSVLDEVRRLEGQGYRELTLLGQNVNSYRDDEAGADFALLLDEVSKAAGEMRVRFTTSHPKDISEDLVNVVAQRENVCNAIHLPVQSGSSRMLEVMHRGHTRREYLDKIAMIRSAVPGVALSTDLIAGFCGETEEDHLQTLSLMEEVRFDYAYMFYYSVRPGTYAARHLTDDVALEEKKRRLQEIIDLQSGISGEIFGNDVGSVQEVLAESESRRSSDMLMGRSDTNRVVVFDRQHYQPGDLVRVVIESSTQATLIGRCQDPGEG.

An MTTase N-terminal domain is found at 3–119; sequence KKVSIRTFGC…LPGLIRNAFQ (117 aa). [4Fe-4S] cluster contacts are provided by Cys12, Cys48, Cys82, Cys155, Cys159, and Cys162. The Radical SAM core domain occupies 141 to 371; the sequence is RSGSISAFIP…IDLQSGISGE (231 aa). Residues 374 to 437 form the TRAM domain; it reads GNDVGSVQEV…QATLIGRCQD (64 aa).

Belongs to the methylthiotransferase family. MiaB subfamily. As to quaternary structure, monomer. [4Fe-4S] cluster is required as a cofactor.

The protein localises to the cytoplasm. The catalysed reaction is N(6)-dimethylallyladenosine(37) in tRNA + (sulfur carrier)-SH + AH2 + 2 S-adenosyl-L-methionine = 2-methylsulfanyl-N(6)-dimethylallyladenosine(37) in tRNA + (sulfur carrier)-H + 5'-deoxyadenosine + L-methionine + A + S-adenosyl-L-homocysteine + 2 H(+). Catalyzes the methylthiolation of N6-(dimethylallyl)adenosine (i(6)A), leading to the formation of 2-methylthio-N6-(dimethylallyl)adenosine (ms(2)i(6)A) at position 37 in tRNAs that read codons beginning with uridine. This is tRNA-2-methylthio-N(6)-dimethylallyladenosine synthase from Prosthecochloris aestuarii (strain DSM 271 / SK 413).